The chain runs to 267 residues: Extensin (267 aa).

The segment at 1–267 (MCPAFSIFFN…HTPSPPPPYY (267 aa)) is disordered. 13 consecutive repeats follow at residues 18-33 (PPTYTPSPKPPTPKPT), 34-54 (PPTYTPSPKPPASKPPTPKPT), 55-70 (PPTYTPSPKPPTPKPT), 71-91 (PPTYTPSPKPPATKPPTPKPT), 92-107 (PPTYTPSPKPPTPKPT), 108-128 (PPTYTPSPKPPATKPPTPKPT), 129-144 (PPTYTPSPKPPTPKPT), 145-160 (PPTYTPSPKPPTPKPT), 161-179 (PPTYTPSPKPPTHPTPKPT), 180-195 (PPTYTPSPKPPTPKPT), 196-211 (PPTYTPSPKPPTPKPT), 212-232 (PPTYTPSPKPPATKPPTPKPT), and 233-253 (PPTYTPTPKPPATKPPTYTPT). A highly repetitive region spans residues 18–253 (PPTYTPSPKP…ATKPPTYTPT (236 aa)). Residues 20-267 (TYTPSPKPPT…HTPSPPPPYY (248 aa)) show a composition bias toward pro residues. Residues 261–265 (SPPPP) form an extensin repetitive element region.

Post-translationally, hydroxylated on proline residues in the S-P-P-P-P repeat. In terms of processing, O-glycosylated on hydroxyprolines. Mainly in the coleoptile node and root tip.

The protein resides in the secreted. It localises to the primary cell wall. Its function is as follows. Structural component in primary cell wall. The polypeptide is Extensin (HRGP) (Zea mays (Maize)).